Consider the following 179-residue polypeptide: Large ribosomal subunit protein uL5 (179 aa).

Belongs to the universal ribosomal protein uL5 family. Part of the 50S ribosomal subunit; part of the 5S rRNA/L5/L18/L25 subcomplex. Contacts the 5S rRNA and the P site tRNA. Forms a bridge to the 30S subunit in the 70S ribosome.

This is one of the proteins that bind and probably mediate the attachment of the 5S RNA into the large ribosomal subunit, where it forms part of the central protuberance. In the 70S ribosome it contacts protein S13 of the 30S subunit (bridge B1b), connecting the 2 subunits; this bridge is implicated in subunit movement. Contacts the P site tRNA; the 5S rRNA and some of its associated proteins might help stabilize positioning of ribosome-bound tRNAs. In Rickettsia prowazekii (strain Madrid E), this protein is Large ribosomal subunit protein uL5.